Reading from the N-terminus, the 291-residue chain is 33 kDa chaperonin (291 aa).

2 cysteine pairs are disulfide-bonded: C237-C239 and C270-C273.

It belongs to the HSP33 family. In terms of processing, under oxidizing conditions two disulfide bonds are formed involving the reactive cysteines. Under reducing conditions zinc is bound to the reactive cysteines and the protein is inactive.

The protein localises to the cytoplasm. In terms of biological role, redox regulated molecular chaperone. Protects both thermally unfolding and oxidatively damaged proteins from irreversible aggregation. Plays an important role in the bacterial defense system toward oxidative stress. The protein is 33 kDa chaperonin of Halalkalibacterium halodurans (strain ATCC BAA-125 / DSM 18197 / FERM 7344 / JCM 9153 / C-125) (Bacillus halodurans).